We begin with the raw amino-acid sequence, 217 residues long: Adenylate kinase (217 aa).

10 to 15 (GIGKGT) contributes to the ATP binding site. An NMP region spans residues 30–59 (STGDIFRKNFKENTELGTLSKKFIAQGLLV). AMP is bound by residues Thr31, Arg36, 57–59 (LLV), 85–88 (GFPR), and Gln92. The tract at residues 126–163 (GRRICPECGKVYHIEKIPPKNPGICDKDQKTLIQREDD) is LID. Residue Arg127 coordinates ATP. Residues Cys130 and Cys133 each coordinate Zn(2+). Residue 136–137 (VY) coordinates ATP. The Zn(2+) site is built by Cys150 and Asp153. AMP contacts are provided by Arg160 and Arg171. Residue Gln199 coordinates ATP.

It belongs to the adenylate kinase family. As to quaternary structure, monomer.

The protein localises to the cytoplasm. The enzyme catalyses AMP + ATP = 2 ADP. It participates in purine metabolism; AMP biosynthesis via salvage pathway; AMP from ADP: step 1/1. In terms of biological role, catalyzes the reversible transfer of the terminal phosphate group between ATP and AMP. Plays an important role in cellular energy homeostasis and in adenine nucleotide metabolism. The polypeptide is Adenylate kinase (Aster yellows witches'-broom phytoplasma (strain AYWB)).